The sequence spans 435 residues: Angio-associated migratory cell protein (435 aa).

Positions 1–65 are disordered; sequence MESESESGAA…EEEEEGNEEG (65 aa). Serine 20 carries the phosphoserine modification. The span at 39–63 shows a compositional bias: acidic residues; the sequence is DPDDLAQEMEDVDFEEEEEEEEGNE. WD repeat units follow at residues 90 to 130, 133 to 172, 174 to 213, 215 to 255, 259 to 300, 316 to 355, 357 to 396, and 399 to 434; these read LHSA…LLFE, GHKD…EVWS, EAGD…KTFQ, PNCP…HVLK, GHQG…GVFR, SESN…LRHQ, QHQS…LLTD, and GHTA…QRPD.

The protein resides in the cell membrane. It localises to the cytoplasm. Functionally, plays a role in angiogenesis and cell migration. In smooth muscle cell migration, may act through the RhoA pathway. The polypeptide is Angio-associated migratory cell protein (AAMP) (Canis lupus familiaris (Dog)).